A 563-amino-acid polypeptide reads, in one-letter code: Arginine--tRNA ligase (563 aa).

The 'HIGH' region motif lies at 120-130 (PNIAKPFHIGH).

Belongs to the class-I aminoacyl-tRNA synthetase family. In terms of assembly, monomer.

The protein localises to the cytoplasm. It catalyses the reaction tRNA(Arg) + L-arginine + ATP = L-arginyl-tRNA(Arg) + AMP + diphosphate. In Clostridium botulinum (strain Okra / Type B1), this protein is Arginine--tRNA ligase.